The sequence spans 757 residues: MSENSSDSDSSCGWTVISHEGSDIEMLNSVTPTDSCEPAPECSSLEQEELQALQIEQGESSQNGTVLMEETAYPALEETSSTIEAEEQKIPEDSIYIGTASDDSDIVTLEPPKLEEIGNQEVVIVEEAQSSEDFNMGSSSSSQYTFCQPETVFSSQPSDDESSSDETSNQPSPAFRRRRARKKTVSASESEDRLVAEQETEPSKELSKRQFSSGLNKCVILALVIAISMGFGHFYGTIQIQKRQQLVRKIHEDELNDMKDYLSQCQQEQESFIDYKSLKENLARCWTLTEAEKMSFETQKTNLATENQYLRVSLEKEEKALSSLQEELNKLREQIRILEDKGTSTELVKENQKLKQHLEEEKQKKHSFLSQRETLLTEAKMLKRELERERLVTTALRGELQQLSGSQLHGKSDSPNVYTEKKEIAILRERLTELERKLTFEQQRSDLWERLYVEAKDQNGKQGTDGKKKGGRGSHRAKNKSKETFLGSVKETFDAMKNSTKEFVRHHKEKIKQAKEAVKENLKKFSDSVKSTFRHFKDTTKNIFDEKGNKRFGATKEAAEKPRTVFSDYLHPQYKAPTENHHNRGPTMQNDGRKEKPVHFKEFRKNTNSKKCSPGHDCRENSHSFRKACSGVFDCAQQESMSLFNTVVNPIRMDEFRQIIQRYMLKELDTFCHWNELDQFINKFFLNGVFIHDQKLFTDFVNDVKDYLRNMKEYEVDNDGVFEKLDEYIYRHFFGHTFSPPYGPRSVYIKPCHYSSL.

The Cytoplasmic portion of the chain corresponds to 1-217; it reads MSENSSDSDS…KRQFSSGLNK (217 aa). An interaction with MCF2L and SRC region spans residues 1–308; it reads MSENSSDSDS…QKTNLATENQ (308 aa). A disordered region spans residues 152–207; the sequence is VFSSQPSDDESSSDETSNQPSPAFRRRRARKKTVSASESEDRLVAEQETEPSKELS. Residues 175-184 show a composition bias toward basic residues; the sequence is FRRRRARKKT. Ser-186 carries the phosphoserine modification. A compositionally biased stretch (basic and acidic residues) spans 190 to 207; it reads SEDRLVAEQETEPSKELS. A helical; Signal-anchor for type II membrane protein transmembrane segment spans residues 218–238; that stretch reads CVILALVIAISMGFGHFYGTI. Residues 239-757 are Lumenal-facing; it reads QIQKRQQLVR…YIKPCHYSSL (519 aa). Coiled coils occupy residues 248–272 and 306–450; these read RKIH…QESF and ENQY…LWER. Basic and acidic residues predominate over residues 458–468; sequence QNGKQGTDGKK. Residues 458–483 are disordered; it reads QNGKQGTDGKKKGGRGSHRAKNKSKE. Positions 469-479 are enriched in basic residues; that stretch reads KGGRGSHRAKN. Residues 504–530 adopt a coiled-coil conformation; it reads VRHHKEKIKQAKEAVKENLKKFSDSVK.

The protein belongs to the CCPG1 family. In terms of assembly, interacts with MCF2L. May interact with MCF2, ARHGEF1, BCR, VAV1 and FGD1, but not with TIAM1. Interacts with GTP-bound CDC42 and SRC.

The protein localises to the cytoplasmic granule membrane. In terms of biological role, acts as an assembly platform for Rho protein signaling complexes. Limits guanine nucleotide exchange activity of MCF2L toward RHOA, which results in an inhibition of both its transcriptional activation ability and its transforming activity. Does not inhibit activity of MCF2L toward CDC42, or activity of MCF2 toward either RHOA or CDC42. May be involved in cell cycle regulation. In Homo sapiens (Human), this protein is Cell cycle progression protein 1 (CCPG1).